Here is a 365-residue protein sequence, read N- to C-terminus: 3-dehydroquinate synthase (365 aa).

NAD(+)-binding positions include 106–110 (GVIGD), 130–131 (TT), K142, K151, and 169–172 (FFAT). The Zn(2+) site is built by E184, H247, and H264.

This sequence belongs to the sugar phosphate cyclases superfamily. Dehydroquinate synthase family. NAD(+) serves as cofactor. The cofactor is Co(2+). Zn(2+) is required as a cofactor.

The protein localises to the cytoplasm. It carries out the reaction 7-phospho-2-dehydro-3-deoxy-D-arabino-heptonate = 3-dehydroquinate + phosphate. It functions in the pathway metabolic intermediate biosynthesis; chorismate biosynthesis; chorismate from D-erythrose 4-phosphate and phosphoenolpyruvate: step 2/7. Functionally, catalyzes the conversion of 3-deoxy-D-arabino-heptulosonate 7-phosphate (DAHP) to dehydroquinate (DHQ). The chain is 3-dehydroquinate synthase from Listeria innocua serovar 6a (strain ATCC BAA-680 / CLIP 11262).